Reading from the N-terminus, the 399-residue chain is LEM domain-containing protein Bocksbeutel (399 aa).

Positions Leu-4–Val-48 constitute an LEM domain. Disordered regions lie at residues Pro-49–Arg-103, Ser-119–Val-141, and Asn-233–Ala-287. 2 stretches are compositionally biased toward polar residues: residues His-68 to Ser-77 and Gly-89 to Ser-99. The segment covering Asn-233–Phe-256 has biased composition (polar residues). A helical membrane pass occupies residues Phe-377–Pro-397.

The protein localises to the nucleus inner membrane. The protein resides in the cytoplasm. Its subcellular location is the nucleus. It localises to the nucleoplasm. It is found in the endoplasmic reticulum. Its function is as follows. Inner nuclear membrane protein. May have a role in maintaining the structural integrity of the nuclear lamina. During pupal development, plays essential and redundant functions with the other LEM domain proteins; MAN1 and Ote. Also has a redundant but important role with Ote in larval development. In Drosophila melanogaster (Fruit fly), this protein is LEM domain-containing protein Bocksbeutel.